The primary structure comprises 178 residues: Caveolin-1 (178 aa).

S2 is modified (N-acetylserine). At S2 the chain carries Phosphoserine. The tract at residues 2–94 (SGGKYVDSEG…WKASFTTFTV (93 aa)) is required for homooligomerization. The Cytoplasmic segment spans residues 2 to 104 (SGGKYVDSEG…TKYWFYRLLS (103 aa)). K5 is subject to N6-acetyllysine; alternate. Residue K5 forms a Glycyl lysine isopeptide (Lys-Gly) (interchain with G-Cter in ubiquitin); alternate linkage. At Y6 the chain carries Phosphotyrosine. Position 9 is a phosphoserine (S9). Y14 carries the phosphotyrosine; by ABL1 and INSR modification. Y25 carries the post-translational modification Phosphotyrosine. Glycyl lysine isopeptide (Lys-Gly) (interchain with G-Cter in ubiquitin) cross-links involve residues K26, K30, K39, K47, and K57. The tract at residues 82-94 (DGIWKASFTTFTV) is interaction with CAVIN3. Positions 105–125 (TIFGIPMALIWGIYFAILSFL) form an intramembrane region, helical. At 126-178 (HIWAVVPCIKSFLIEIQCISRVYSIYVHTFCDPLFEAIGKIFSNIRISTQKEI) the chain is on the cytoplasmic side. Positions 131-142 (VPCIKSFLIEIQ) are interacts with SPRY1, SPRY2, SPRY3 and SPRY4. S-palmitoyl cysteine attachment occurs at residues C133, C143, and C156. The segment at 149–160 (SIYVHTFCDPLF) is interacts with SPRY1, SPRY2, and SPRY4. The interacts with SPRY1, SPRY2, SPRY3 and SPRY4 stretch occupies residues 167-178 (FSNIRISTQKEI).

This sequence belongs to the caveolin family. In terms of assembly, homooligomer. Interacts (via the N-terminus) with DPP4; the interaction is direct. Forms a stable heterooligomeric complex with CAV2 that targets to lipid rafts and drives caveolae formation. Interacts with BMX, BTK, CTNNB1, CDH1, GLIPR2, JUP, NOSTRIN, SNAP25 and STX1A. Interacts with SLC7A9. Interacts with TGFBR1. Interacts with CTNNB1, CDH1 and JUP. Interacts with PACSIN2; this interaction induces membrane tubulation. Interacts with CAVIN3 (via leucine-zipper domain) in a cholesterol-sensitive manner. Interacts with EHD2 in a cholesterol-dependent manner. Interacts with CAVIN1. Forms a ternary complex with UBXN6 and VCP; mediates CAV1 targeting to lysosomes for degradation. Interacts with ABCG1; this interaction regulates ABCG1-mediated cholesterol efflux. Interacts with NEU3; this interaction enhances NEU3 sialidase activity within caveola. Interacts (via C-terminus) with SPRY1, SPRY2 (via C-terminus), SPRY3, and SPRY4. Interacts with IGFBP5; this interaction allows trafficking of IGFBP5 from the plasma membrane to the nucleus. Post-translationally, the N-terminus of both isoforms are blocked. In terms of processing, phosphorylated at Tyr-14 by ABL1 in response to oxidative stress. Ubiquitinated. Undergo monoubiquitination and multi- and/or polyubiquitination. Monoubiquitination of N-terminal lysines promotes integration in a ternary complex with UBXN6 and VCP which promotes oligomeric CAV1 targeting to lysosomes for degradation. Ubiquitinated by ZNRF1; leading to degradation and modulation of the TLR4-mediated immune response. As to expression, adipose tissue, lung, heart, skeletal muscle, stomach, small bowel, kidney, spleen and testis (at protein level).

The protein localises to the golgi apparatus membrane. It localises to the cell membrane. It is found in the membrane. Its subcellular location is the caveola. The protein resides in the membrane raft. The protein localises to the golgi apparatus. It localises to the trans-Golgi network. May act as a scaffolding protein within caveolar membranes. Forms a stable heterooligomeric complex with CAV2 that targets to lipid rafts and drives caveolae formation. Mediates the recruitment of CAVIN proteins (CAVIN1/2/3/4) to the caveolae. Interacts directly with G-protein alpha subunits and can functionally regulate their activity. Involved in the costimulatory signal essential for T-cell receptor (TCR)-mediated T-cell activation. Its binding to DPP4 induces T-cell proliferation and NF-kappa-B activation in a T-cell receptor/CD3-dependent manner. Recruits CTNNB1 to caveolar membranes and may regulate CTNNB1-mediated signaling through the Wnt pathway. Negatively regulates TGFB1-mediated activation of SMAD2/3 by mediating the internalization of TGFBR1 from membrane rafts leading to its subsequent degradation. Binds 20(S)-hydroxycholesterol (20(S)-OHC). This is Caveolin-1 (Cav1) from Mus musculus (Mouse).